Here is a 173-residue protein sequence, read N- to C-terminus: Endoribonuclease YbeY (173 aa).

Zn(2+) contacts are provided by H120, H124, and H130.

It belongs to the endoribonuclease YbeY family. The cofactor is Zn(2+).

It localises to the cytoplasm. Its function is as follows. Single strand-specific metallo-endoribonuclease involved in late-stage 70S ribosome quality control and in maturation of the 3' terminus of the 16S rRNA. This chain is Endoribonuclease YbeY, found in Kineococcus radiotolerans (strain ATCC BAA-149 / DSM 14245 / SRS30216).